A 163-amino-acid polypeptide reads, in one-letter code: Probable phosphotransferase enzyme IIB component M6_Spy0801 (163 aa).

Residues 1-163 form the PTS EIIB type-4 domain; sequence MITQIRVDDR…TKVHLSQLVN (163 aa). His13 acts as the Pros-phosphohistidine intermediate in catalysis.

Its subcellular location is the cytoplasm. In terms of biological role, the phosphoenolpyruvate-dependent sugar phosphotransferase system (sugar PTS), a major carbohydrate active -transport system, catalyzes the phosphorylation of incoming sugar substrates concomitantly with their translocation across the cell membrane. This chain is Probable phosphotransferase enzyme IIB component M6_Spy0801, found in Streptococcus pyogenes serotype M6 (strain ATCC BAA-946 / MGAS10394).